A 159-amino-acid chain; its full sequence is Ankyrin repeat domain-containing protein 37 (159 aa).

ANK repeat units lie at residues 1-25, 30-59, and 63-92; these read MLLLSCNLEEDDLKSLLETGASVNA, QEQSPAHLAAGGGLACFLLWQLQTGADLNQ, and LGETPLHKAAKVGSLDCLSLLVASDVQIGV. The short motif at 130 to 150 is the Nuclear localization signal element; it reads EQQERDPRAPVLRQKRSFRTV.

In terms of processing, ubiquitinated by the CRL2(FEM1B) complex, leading to its degradation. Expressed testis, ovary, uterus, kidney, liver, but not in other tissues.

The protein localises to the nucleus. The protein resides in the cytoplasm. In Mus musculus (Mouse), this protein is Ankyrin repeat domain-containing protein 37.